Consider the following 330-residue polypeptide: DNA-directed RNA polymerase subunit alpha (330 aa).

The interval 1–229 (MKNLKFIKPF…DHFNVLVELS (229 aa)) is alpha N-terminal domain (alpha-NTD). Residues 245-330 (AHNYVLDLEI…HSVEEDKDKH (86 aa)) are alpha C-terminal domain (alpha-CTD).

The protein belongs to the RNA polymerase alpha chain family. Homodimer. The RNAP catalytic core consists of 2 alpha, 1 beta, 1 beta' and 1 omega subunit. When a sigma factor is associated with the core the holoenzyme is formed, which can initiate transcription.

It catalyses the reaction RNA(n) + a ribonucleoside 5'-triphosphate = RNA(n+1) + diphosphate. DNA-dependent RNA polymerase catalyzes the transcription of DNA into RNA using the four ribonucleoside triphosphates as substrates. The sequence is that of DNA-directed RNA polymerase subunit alpha from Aster yellows witches'-broom phytoplasma (strain AYWB).